The following is a 177-amino-acid chain: Ubiquinol-cytochrome c reductase iron-sulfur subunit (177 aa).

A helical membrane pass occupies residues 18–38 (MVLTASSVAAIGAVCTLWPLV). In terms of domain architecture, Rieske spans 88-175 (ARAVKMSELI…YTFISDKKIR (88 aa)). [2Fe-2S] cluster is bound by residues cysteine 120, histidine 122, cysteine 139, and histidine 142. Cysteines 125 and 141 form a disulfide.

This sequence belongs to the Rieske iron-sulfur protein family. The main subunits of complex b-c1 are: cytochrome b, cytochrome c1 and the Rieske protein. The cofactor is [2Fe-2S] cluster.

It is found in the cell membrane. It carries out the reaction a quinol + 2 Fe(III)-[cytochrome c](out) = a quinone + 2 Fe(II)-[cytochrome c](out) + 2 H(+)(out). Functionally, component of the ubiquinol-cytochrome c reductase complex (complex III or cytochrome b-c1 complex), which is a respiratory chain that generates an electrochemical potential coupled to ATP synthesis. In Rickettsia conorii (strain ATCC VR-613 / Malish 7), this protein is Ubiquinol-cytochrome c reductase iron-sulfur subunit (petA).